We begin with the raw amino-acid sequence, 145 residues long: Cell division protein SepF (145 aa).

A disordered region spans residues 21-41 (DKPQESTKAKEENVKPKHETP). The segment covering 23 to 41 (PQESTKAKEENVKPKHETP) has biased composition (basic and acidic residues).

This sequence belongs to the SepF family. In terms of assembly, homodimer. Interacts with FtsZ.

It is found in the cytoplasm. Functionally, cell division protein that is part of the divisome complex and is recruited early to the Z-ring. Probably stimulates Z-ring formation, perhaps through the cross-linking of FtsZ protofilaments. Its function overlaps with FtsA. The polypeptide is Cell division protein SepF (Caldicellulosiruptor saccharolyticus (strain ATCC 43494 / DSM 8903 / Tp8T 6331)).